A 158-amino-acid polypeptide reads, in one-letter code: Ribosome maturation factor RimP (158 aa).

It belongs to the RimP family.

It is found in the cytoplasm. In terms of biological role, required for maturation of 30S ribosomal subunits. This chain is Ribosome maturation factor RimP, found in Pseudomonas fluorescens (strain ATCC BAA-477 / NRRL B-23932 / Pf-5).